A 539-amino-acid chain; its full sequence is BTB/POZ domain-containing protein 6 (539 aa).

Positions 1–23 (MLLPLACLHGRVAQCLTSLLVLA) are cleaved as a signal peptide. Residues 137 to 207 (ADVHFIVGAL…MYSDEIDLEA (71 aa)) enclose the BTB domain.

It is found in the cytoplasm. In terms of biological role, adapter protein for the cul3 E3 ubiquitin-protein ligase complex. Involved in late neuronal development and muscle formation. This Mus musculus (Mouse) protein is BTB/POZ domain-containing protein 6 (Btbd6).